Reading from the N-terminus, the 146-residue chain is Lysozyme C-2 (146 aa).

An N-terminal signal peptide occupies residues 1 to 18 (MKTLLVLALLLLSVSVQA). Positions 19-146 (KVYDRCEFAR…VSQYIRGCKL (128 aa)) constitute a C-type lysozyme domain. 4 disulfide bridges follow: cysteine 24-cysteine 144, cysteine 48-cysteine 132, cysteine 81-cysteine 97, and cysteine 93-cysteine 111. Residues glutamate 53 and aspartate 69 contribute to the active site.

This sequence belongs to the glycosyl hydrolase 22 family. In terms of assembly, monomer.

Its subcellular location is the secreted. It carries out the reaction Hydrolysis of (1-&gt;4)-beta-linkages between N-acetylmuramic acid and N-acetyl-D-glucosamine residues in a peptidoglycan and between N-acetyl-D-glucosamine residues in chitodextrins.. In terms of biological role, lysozymes have primarily a bacteriolytic function; those in tissues and body fluids are associated with the monocyte-macrophage system and enhance the activity of immunoagents. The sequence is that of Lysozyme C-2 from Sus scrofa (Pig).